Reading from the N-terminus, the 449-residue chain is Deoxyguanosinetriphosphate triphosphohydrolase-like protein (449 aa).

The disordered stretch occupies residues 1 to 27 (MTSSVWQERRHGEDKQRRNDHRSPYQR). Residues 7 to 27 (QERRHGEDKQRRNDHRSPYQR) are compositionally biased toward basic and acidic residues. Residues 59–255 (RLTHSLEVSQ…MELADDIAYA (197 aa)) enclose the HD domain.

It belongs to the dGTPase family. Type 2 subfamily.

The chain is Deoxyguanosinetriphosphate triphosphohydrolase-like protein from Shewanella baltica (strain OS223).